We begin with the raw amino-acid sequence, 569 residues long: MSNAMTSKLERFIDQGVGRVPADIVLKGGCFFDLVTGELVQSDIAIGADRIVGTSGNYEGETEIDISGRIVVPGFIDTHLHIESSLVTPHEFDRCVLPYGVTTAICDPHEIANVLGAAGIEFFLESALETIMDIRVQLSSCVPATHLETSGADLPIESLLPYRHHPKVIGLAEFMNFPGVIHKDPICMAKLDAFQGGHIDGHAPLLSGNDLNGYLAAGIRTEHECTTASEALEKIRKGVHILVREGSVSKDLAALMPIITERLSPFLALCTDDRNPLDIAEQGHLDHMIRTAIASRVEPLAIYRAASISAARAFGLKDRGLVAPGWRADLVVLDSLENCRADMVFSAGRRVTDALFSSRRPVAPIGLDSVKARPVNAAHFGVPVAEGETPVIGVIPGKIITEHRRYRLPVRGNEAAVDLANDIIKVAVIERHGKNGNHANGFVQGFGLKKGAIASTVGHDSHNICVVGVSEDDMARAANRLSEIKGGFVVVEDGKVTGEIALPIAGLMSLEPYETVRDTLHQLRKAAFALGATLEEPFLQLAFLPLPVIPHLKISDRGMVDVDKFALIG.

Belongs to the metallo-dependent hydrolases superfamily. Adenine deaminase family. Requires Mn(2+) as cofactor.

It carries out the reaction adenine + H2O + H(+) = hypoxanthine + NH4(+). The chain is Adenine deaminase 1 from Rhizobium johnstonii (strain DSM 114642 / LMG 32736 / 3841) (Rhizobium leguminosarum bv. viciae).